We begin with the raw amino-acid sequence, 153 residues long: Ribonuclease 2 (153 aa).

The protein belongs to the BetVI family.

It is found in the cytoplasm. Its function is as follows. Catalyzes the two-stage endonucleolytic cleavage to 3'-phosphomononucleotides and 3'-phosphooligonucleotides with 2',3'-cyclic phosphate intermediates. In Panax ginseng (Korean ginseng), this protein is Ribonuclease 2.